The primary structure comprises 508 residues: Endo-4-O-sulfatase (508 aa).

Ser-84 bears the 3-oxoalanine (Ser) mark.

The protein belongs to the sulfatase family. The conversion to 3-oxoalanine (also known as C-formylglycine, FGly), of a serine or cysteine residue in prokaryotes and of a cysteine residue in eukaryotes, is critical for catalytic activity.

Functionally, endosulfatase involved in the degradation of the glycosaminoglycans (GAGs) chondroitin sulfate (CS) and dermatan sulfate (DS). Efficiently hydrolyzes sulfate groups from a broad range of substrate size, including disaccharide to high molecular weight CS and DS polymers. Has a strict specificity for the 4-O-sulfate groups of galactosamine. GAG-specific sulfatases play a key role in the persistence of the major human gut symbiont B.thetaiotaomicron in the host gastrointestinal tract. This chain is Endo-4-O-sulfatase, found in Bacteroides thetaiotaomicron (strain ATCC 29148 / DSM 2079 / JCM 5827 / CCUG 10774 / NCTC 10582 / VPI-5482 / E50).